The chain runs to 461 residues: Photosystem II CP43 reaction center protein (461 aa).

A propeptide spanning residues 1–2 is cleaved from the precursor; sequence ME. An N-acetylthreonine modification is found at Thr-3. Phosphothreonine is present on Thr-3. Helical transmembrane passes span 57-81, 122-143, 166-188, 243-263, and 279-300; these read LFEVAHFVPEKPMYEQGLILLPHLA, LIGPETLEETFPFFGYTWKDKN, KAMYFGGVYDTWAPGGGDTRIIT, QPWAWTRRAFVWSGEAYLSYS, and WFNNTAYPSEFYGPTGPEASQS. Residue Glu-355 participates in [CaMn4O5] cluster binding. The chain crosses the membrane as a helical span at residues 435–459; the sequence is RARAAAAGFEKGIDRLTEPVLSLKP.

This sequence belongs to the PsbB/PsbC family. PsbC subfamily. PSII is composed of 1 copy each of membrane proteins PsbA, PsbB, PsbC, PsbD, PsbE, PsbF, PsbH, PsbI, PsbJ, PsbK, PsbL, PsbM, PsbT, PsbX, PsbY, PsbZ, Psb30/Ycf12, at least 3 peripheral proteins of the oxygen-evolving complex and a large number of cofactors. It forms dimeric complexes. Requires Binds multiple chlorophylls and provides some of the ligands for the Ca-4Mn-5O cluster of the oxygen-evolving complex. It may also provide a ligand for a Cl- that is required for oxygen evolution. PSII binds additional chlorophylls, carotenoids and specific lipids. as cofactor.

It is found in the plastid. The protein localises to the chloroplast thylakoid membrane. One of the components of the core complex of photosystem II (PSII). It binds chlorophyll and helps catalyze the primary light-induced photochemical processes of PSII. PSII is a light-driven water:plastoquinone oxidoreductase, using light energy to abstract electrons from H(2)O, generating O(2) and a proton gradient subsequently used for ATP formation. This is Photosystem II CP43 reaction center protein from Stigeoclonium helveticum (Green alga).